A 212-amino-acid chain; its full sequence is Pyridoxine/pyridoxamine 5'-phosphate oxidase (212 aa).

Substrate-binding positions include 8-11 (RREY) and Lys-66. Residues 61-66 (RIVLLK), 76-77 (FT), Arg-82, Lys-83, and Gln-105 contribute to the FMN site. 3 residues coordinate substrate: Tyr-123, Arg-127, and Ser-131. FMN-binding positions include 140–141 (QS) and Trp-185. 191–193 (RLH) provides a ligand contact to substrate. Arg-195 contributes to the FMN binding site.

The protein belongs to the pyridoxamine 5'-phosphate oxidase family. In terms of assembly, homodimer. FMN serves as cofactor.

It carries out the reaction pyridoxamine 5'-phosphate + O2 + H2O = pyridoxal 5'-phosphate + H2O2 + NH4(+). It catalyses the reaction pyridoxine 5'-phosphate + O2 = pyridoxal 5'-phosphate + H2O2. It functions in the pathway cofactor metabolism; pyridoxal 5'-phosphate salvage; pyridoxal 5'-phosphate from pyridoxamine 5'-phosphate: step 1/1. The protein operates within cofactor metabolism; pyridoxal 5'-phosphate salvage; pyridoxal 5'-phosphate from pyridoxine 5'-phosphate: step 1/1. In terms of biological role, catalyzes the oxidation of either pyridoxine 5'-phosphate (PNP) or pyridoxamine 5'-phosphate (PMP) into pyridoxal 5'-phosphate (PLP). The chain is Pyridoxine/pyridoxamine 5'-phosphate oxidase from Shewanella oneidensis (strain ATCC 700550 / JCM 31522 / CIP 106686 / LMG 19005 / NCIMB 14063 / MR-1).